We begin with the raw amino-acid sequence, 259 residues long: NH(3)-dependent NAD(+) synthetase (259 aa).

Residue 33–40 participates in ATP binding; sequence GLSGGIDS. D39 lines the Mg(2+) pocket. R119 lines the deamido-NAD(+) pocket. ATP is bound at residue T139. E144 provides a ligand contact to Mg(2+). K152 and D159 together coordinate deamido-NAD(+). Residues K168 and S190 each contribute to the ATP site. Position 249 to 250 (249 to 250) interacts with deamido-NAD(+); that stretch reads HK.

This sequence belongs to the NAD synthetase family. In terms of assembly, homodimer.

It carries out the reaction deamido-NAD(+) + NH4(+) + ATP = AMP + diphosphate + NAD(+) + H(+). The protein operates within cofactor biosynthesis; NAD(+) biosynthesis; NAD(+) from deamido-NAD(+) (ammonia route): step 1/1. Catalyzes the ATP-dependent amidation of deamido-NAD to form NAD. Uses ammonia as a nitrogen source. This is NH(3)-dependent NAD(+) synthetase from Methanocaldococcus jannaschii (strain ATCC 43067 / DSM 2661 / JAL-1 / JCM 10045 / NBRC 100440) (Methanococcus jannaschii).